The sequence spans 678 residues: ABC transporter B family member 6 (678 aa).

The next 6 helical transmembrane spans lie at 95 to 115, 128 to 148, 206 to 226, 230 to 250, 314 to 334, and 346 to 366; these read IILCVSIIFFSKLINLSVPLI, EWHLLILYGVLFLIQKSIWDI, LLFNIFPTLVELFTVSTFLLF, AEFAFINLTSCVVYIAFTLYV, FLLNFGQSSIIVIGTTLGLGL, and LGDVIAINTFIAQMFSPLSWL. The ABC transmembrane type-1 domain occupies 95–375; that stretch reads IILCVSIIFF…LGSSYRMILT (281 aa). In terms of domain architecture, ABC transporter spans 418-660; that stretch reads IEFRNISFTY…NGDYAHLWNQ (243 aa). ATP-binding positions include tyrosine 427 and 459–470; that span reads GSTGGGKSTIFR.

The protein belongs to the ABC transporter superfamily. ABCB family. Heavy Metal importer (TC 3.A.1.210) subfamily.

The protein localises to the membrane. The sequence is that of ABC transporter B family member 6 (abcB6) from Dictyostelium discoideum (Social amoeba).